Here is a 485-residue protein sequence, read N- to C-terminus: Bifunctional protein GlmU (485 aa).

Residues 1–241 (MSASDFSSAV…ARELAGVNDR (241 aa)) are pyrophosphorylase. UDP-N-acetyl-alpha-D-glucosamine contacts are provided by residues 13–16 (LAAG), Lys27, Gln84, and 89–90 (GT). Residue Asp114 coordinates Mg(2+). UDP-N-acetyl-alpha-D-glucosamine is bound by residues Gly151, Glu166, Asn181, and Asn239. Asn239 lines the Mg(2+) pocket. The linker stretch occupies residues 242-262 (VQLAEAGAELNRRTVIAAMRG). An N-acetyltransferase region spans residues 263–485 (GATIVDPATT…AAQNVHNQEG (223 aa)). Positions 344 and 362 each coordinate UDP-N-acetyl-alpha-D-glucosamine. His374 (proton acceptor) is an active-site residue. The UDP-N-acetyl-alpha-D-glucosamine site is built by Tyr377 and Asn388. Acetyl-CoA is bound by residues Ala391, 397–398 (NY), Ser416, and Ala434. The interval 465 to 485 (RPGTAAAQAAEAAQNVHNQEG) is disordered. The segment covering 469-478 (AAAQAAEAAQ) has biased composition (low complexity).

This sequence in the N-terminal section; belongs to the N-acetylglucosamine-1-phosphate uridyltransferase family. The protein in the C-terminal section; belongs to the transferase hexapeptide repeat family. As to quaternary structure, homotrimer. It depends on Mg(2+) as a cofactor.

It is found in the cytoplasm. It carries out the reaction alpha-D-glucosamine 1-phosphate + acetyl-CoA = N-acetyl-alpha-D-glucosamine 1-phosphate + CoA + H(+). It catalyses the reaction N-acetyl-alpha-D-glucosamine 1-phosphate + UTP + H(+) = UDP-N-acetyl-alpha-D-glucosamine + diphosphate. Its pathway is nucleotide-sugar biosynthesis; UDP-N-acetyl-alpha-D-glucosamine biosynthesis; N-acetyl-alpha-D-glucosamine 1-phosphate from alpha-D-glucosamine 6-phosphate (route II): step 2/2. It functions in the pathway nucleotide-sugar biosynthesis; UDP-N-acetyl-alpha-D-glucosamine biosynthesis; UDP-N-acetyl-alpha-D-glucosamine from N-acetyl-alpha-D-glucosamine 1-phosphate: step 1/1. The protein operates within bacterial outer membrane biogenesis; LPS lipid A biosynthesis. In terms of biological role, catalyzes the last two sequential reactions in the de novo biosynthetic pathway for UDP-N-acetylglucosamine (UDP-GlcNAc). The C-terminal domain catalyzes the transfer of acetyl group from acetyl coenzyme A to glucosamine-1-phosphate (GlcN-1-P) to produce N-acetylglucosamine-1-phosphate (GlcNAc-1-P), which is converted into UDP-GlcNAc by the transfer of uridine 5-monophosphate (from uridine 5-triphosphate), a reaction catalyzed by the N-terminal domain. The protein is Bifunctional protein GlmU of Corynebacterium glutamicum (strain R).